The following is a 357-amino-acid chain: Glucose-6-phosphatase catalytic subunit 1 (357 aa).

At 1 to 28 the chain is on the lumenal side; sequence MEKGMNVLHDFGIQSTHYLQVNYQNSQD. A helical membrane pass occupies residues 29-49; it reads WFILVSVIADLRNAFYVLFPI. Topologically, residues 50–60 are cytoplasmic; sequence WFHLREAVGIK. Residues 61–81 traverse the membrane as a helical segment; the sequence is LLWVAVIGDWLNLVFKWILFG. The Lumenal segment spans residues 82–117; that stretch reads QRPYWWVLDTDYYSNTSAPLIKQFPVTCETGPGSPS. Arg-83 provides a ligand contact to substrate. Residue Asn-96 is glycosylated (N-linked (GlcNAc...) asparagine). A helical membrane pass occupies residues 118–138; it reads GHAMGTAGVYYVMVTSTLSIF. His-119 (proton donor) is an active-site residue. Residues 139 to 147 lie on the Cytoplasmic side of the membrane; it reads RGKKKPTYR. The chain crosses the membrane as a helical span at residues 148 to 168; that stretch reads FRCLNVMLWLGFWVVQLNVCL. The Lumenal segment spans residues 169–170; the sequence is SR. Arg-170 is a substrate binding site. Residues 171 to 191 traverse the membrane as a helical segment; that stretch reads IYLAAHFPHQVVAGVLSGIAV. The Nucleophile role is filled by His-176. The Cytoplasmic portion of the chain corresponds to 192–209; it reads AETFRHIQSIYNASLKKY. A helical transmembrane segment spans residues 210-230; sequence FLITCFLFSFAIGFYLLLKWL. The Lumenal segment spans residues 231-254; it reads GVDLLWTLEKAKRRCERPEWVHID. Residues 255–275 traverse the membrane as a helical segment; sequence TTPFASLLKNLGTLFGLGLAL. The Cytoplasmic portion of the chain corresponds to 276–291; it reads NSSMYRESCKGKLSKW. A helical membrane pass occupies residues 292–312; that stretch reads FPFRLSCIVASLVLLHLFDSL. At 313 to 320 the chain is on the lumenal side; the sequence is KPPSQIEL. A helical transmembrane segment spans residues 321 to 341; that stretch reads IFYVLSFCKSAAVPLASVSLI. Residues 342-357 are Cytoplasmic-facing; sequence PYCLAWVLGQPNKKTV. A Prevents secretion from ER motif is present at residues 354–357; sequence KKTV.

The protein belongs to the glucose-6-phosphatase family.

It localises to the endoplasmic reticulum membrane. It carries out the reaction D-glucose 6-phosphate + H2O = D-glucose + phosphate. The protein operates within carbohydrate biosynthesis; gluconeogenesis. Hydrolyzes glucose-6-phosphate to glucose in the endoplasmic reticulum. Forms with the glucose-6-phosphate transporter (SLC37A4/G6PT) the complex responsible for glucose production in the terminal step of glycogenolysis and gluconeogenesis. Hence, it is the key enzyme in homeostatic regulation of blood glucose levels. The protein is Glucose-6-phosphatase catalytic subunit 1 (G6PC1) of Bos taurus (Bovine).